Reading from the N-terminus, the 442-residue chain is Radical S-adenosyl methionine domain-containing protein 1, mitochondrial (442 aa).

Residues 1–17 constitute a mitochondrion transit peptide; sequence MVPSGVRTGRWVAAARA. Residues 34–270 enclose the Radical SAM core domain; it reads ESASTRAALY…RTVLRDAGFR (237 aa). Tyr-43 is a binding site for S-adenosyl-L-methionine. Positions 49, 53, and 56 each coordinate [4Fe-4S] cluster. S-adenosyl-L-methionine is bound by residues Gly-98, 99–100, Glu-131, Gln-158, Arg-170, and Asp-195; that span reads GT.

Belongs to the anaerobic coproporphyrinogen-III oxidase family. HemW subfamily. [4Fe-4S] cluster serves as cofactor.

The protein localises to the mitochondrion. Its function is as follows. May be a heme chaperone, appears to bind heme. Homologous bacterial proteins do not have oxygen-independent coproporphyrinogen-III oxidase activity. Binds 1 [4Fe-4S] cluster. The cluster is coordinated with 3 cysteines and an exchangeable S-adenosyl-L-methionine. The polypeptide is Radical S-adenosyl methionine domain-containing protein 1, mitochondrial (Rsad1) (Mus musculus (Mouse)).